Here is a 53-residue protein sequence, read N- to C-terminus: Conotoxin Cal22e (53 aa).

Residues 1–5 (GRPSA) constitute a propeptide that is removed on maturation.

Post-translationally, contains 4 disulfide bonds. Expressed by the venom duct.

The protein resides in the secreted. Its function is as follows. Probable neurotoxin with unknown target. Possibly targets ion channels. The protein is Conotoxin Cal22e of Californiconus californicus (California cone).